The sequence spans 211 residues: Glutathione S-transferase class-mu 28 kDa isozyme (211 aa).

A GST N-terminal domain is found at 4-86; the sequence is DHIKVIYFNG…YMAKKHHMMG (83 aa). Glutathione is bound by residues Y10, R16, W41, K45, L53, E70, S71, and D104. The GST C-terminal domain maps to 88 to 211; it reads TEEEYYNVEK…YLSDRAATPF (124 aa).

It belongs to the GST superfamily. Mu family. In terms of assembly, homodimer.

The enzyme catalyses RX + glutathione = an S-substituted glutathione + a halide anion + H(+). Its function is as follows. Conjugation of reduced glutathione to a wide number of exogenous and endogenous hydrophobic electrophiles. In terms of biological role, GST isoenzymes appear to play a central role in the parasite detoxification system. Other functions are also suspected including a role in increasing the solubility of haematin in the parasite gut. This is Glutathione S-transferase class-mu 28 kDa isozyme from Schistosoma haematobium (Blood fluke).